Here is a 393-residue protein sequence, read N- to C-terminus: NAD(P)H-quinone oxidoreductase subunit H, chloroplastic (393 aa).

This sequence belongs to the complex I 49 kDa subunit family. NDH is composed of at least 16 different subunits, 5 of which are encoded in the nucleus.

It localises to the plastid. Its subcellular location is the chloroplast thylakoid membrane. The enzyme catalyses a plastoquinone + NADH + (n+1) H(+)(in) = a plastoquinol + NAD(+) + n H(+)(out). It carries out the reaction a plastoquinone + NADPH + (n+1) H(+)(in) = a plastoquinol + NADP(+) + n H(+)(out). NDH shuttles electrons from NAD(P)H:plastoquinone, via FMN and iron-sulfur (Fe-S) centers, to quinones in the photosynthetic chain and possibly in a chloroplast respiratory chain. The immediate electron acceptor for the enzyme in this species is believed to be plastoquinone. Couples the redox reaction to proton translocation, and thus conserves the redox energy in a proton gradient. The sequence is that of NAD(P)H-quinone oxidoreductase subunit H, chloroplastic from Solanum tuberosum (Potato).